We begin with the raw amino-acid sequence, 216 residues long: Large ribosomal subunit protein uL3 (216 aa).

N5-methylglutamine is present on Gln-157.

It belongs to the universal ribosomal protein uL3 family. As to quaternary structure, part of the 50S ribosomal subunit. Forms a cluster with proteins L14 and L19. In terms of processing, methylated by PrmB.

Functionally, one of the primary rRNA binding proteins, it binds directly near the 3'-end of the 23S rRNA, where it nucleates assembly of the 50S subunit. This Xanthomonas campestris pv. campestris (strain 8004) protein is Large ribosomal subunit protein uL3.